Reading from the N-terminus, the 134-residue chain is MTLNLCVLTPNRIIWDSEVKEIILSTNSGQIGVLPNHAPIATAVDIGILRIRLNDQWLTMALMGGFARIGNNEITILVNDAERGSDIDPQEAQRTLEIAEASLSRAEGKRQEIEANLALRRARTRVEAINVISY.

The protein belongs to the ATPase epsilon chain family. As to quaternary structure, F-type ATPases have 2 components, CF(1) - the catalytic core - and CF(0) - the membrane proton channel. CF(1) has five subunits: alpha(3), beta(3), gamma(1), delta(1), epsilon(1). CF(0) has three main subunits: a, b and c.

The protein resides in the plastid. It is found in the chloroplast thylakoid membrane. In terms of biological role, produces ATP from ADP in the presence of a proton gradient across the membrane. In Drimys granadensis, this protein is ATP synthase epsilon chain, chloroplastic.